A 338-amino-acid chain; its full sequence is Glycerol-3-phosphate dehydrogenase [NAD(P)+] (338 aa).

S14, Y15, H35, and K109 together coordinate NADPH. K109, G138, and T140 together coordinate sn-glycerol 3-phosphate. A142 contacts NADPH. 5 residues coordinate sn-glycerol 3-phosphate: K194, D247, S257, R258, and N259. Catalysis depends on K194, which acts as the Proton acceptor. Residue R258 coordinates NADPH. Residues V282 and E284 each contribute to the NADPH site.

It belongs to the NAD-dependent glycerol-3-phosphate dehydrogenase family.

The protein localises to the cytoplasm. The enzyme catalyses sn-glycerol 3-phosphate + NAD(+) = dihydroxyacetone phosphate + NADH + H(+). The catalysed reaction is sn-glycerol 3-phosphate + NADP(+) = dihydroxyacetone phosphate + NADPH + H(+). It participates in membrane lipid metabolism; glycerophospholipid metabolism. In terms of biological role, catalyzes the reduction of the glycolytic intermediate dihydroxyacetone phosphate (DHAP) to sn-glycerol 3-phosphate (G3P), the key precursor for phospholipid synthesis. This chain is Glycerol-3-phosphate dehydrogenase [NAD(P)+], found in Shewanella baltica (strain OS195).